Consider the following 92-residue polypeptide: Putative transmembrane protein ORF92 (92 aa).

The next 3 membrane-spanning stretches (helical) occupy residues 11 to 28 (FVKGIVLLALTSGATYAI), 32 to 52 (FFSSNYCAIARIIQALLLFAS), and 54 to 74 (FLFDSAGALILGVIVLIIGVG).

The protein localises to the host membrane. The sequence is that of Putative transmembrane protein ORF92 from Acidianus convivator (ABV).